The sequence spans 356 residues: UDP-N-acetylglucosamine--N-acetylmuramyl-(pentapeptide) pyrophosphoryl-undecaprenol N-acetylglucosamine transferase (356 aa).

UDP-N-acetyl-alpha-D-glucosamine is bound by residues 15 to 17 (TGG), Asn127, Arg163, Ser191, Ile244, 263 to 268 (ALTVSE), and Gln288.

Belongs to the glycosyltransferase 28 family. MurG subfamily.

The protein resides in the cell inner membrane. The catalysed reaction is di-trans,octa-cis-undecaprenyl diphospho-N-acetyl-alpha-D-muramoyl-L-alanyl-D-glutamyl-meso-2,6-diaminopimeloyl-D-alanyl-D-alanine + UDP-N-acetyl-alpha-D-glucosamine = di-trans,octa-cis-undecaprenyl diphospho-[N-acetyl-alpha-D-glucosaminyl-(1-&gt;4)]-N-acetyl-alpha-D-muramoyl-L-alanyl-D-glutamyl-meso-2,6-diaminopimeloyl-D-alanyl-D-alanine + UDP + H(+). Its pathway is cell wall biogenesis; peptidoglycan biosynthesis. Cell wall formation. Catalyzes the transfer of a GlcNAc subunit on undecaprenyl-pyrophosphoryl-MurNAc-pentapeptide (lipid intermediate I) to form undecaprenyl-pyrophosphoryl-MurNAc-(pentapeptide)GlcNAc (lipid intermediate II). The sequence is that of UDP-N-acetylglucosamine--N-acetylmuramyl-(pentapeptide) pyrophosphoryl-undecaprenol N-acetylglucosamine transferase from Klebsiella pneumoniae (strain 342).